Consider the following 433-residue polypeptide: PC-esterase domain-containing protein 1B (433 aa).

The tract at residues 386–433 (PPCHQRQAPVVHRGFPRHFARGPYSNPWRDRPRRPPKHSPAGLESRPQ) is disordered.

The protein belongs to the PC-esterase family.

In Mus musculus (Mouse), this protein is PC-esterase domain-containing protein 1B (Pced1b).